Here is a 392-residue protein sequence, read N- to C-terminus: Extracellular metalloproteinase 4 (392 aa).

A propeptide spanning residues 1–9 (VHSVVDYVS) is cleaved from the precursor. A glycan (N-linked (GlcNAc...) asparagine) is linked at asparagine 176. Residue histidine 193 participates in Zn(2+) binding. The active site involves glutamate 194. Histidine 197 contacts Zn(2+). N-linked (GlcNAc...) asparagine glycosylation is found at asparagine 359 and asparagine 385.

It belongs to the peptidase M36 family. Zn(2+) serves as cofactor.

Its subcellular location is the secreted. Its function is as follows. Secreted metalloproteinase probably acting as a virulence factor. This chain is Extracellular metalloproteinase 4 (MEP4), found in Trichophyton soudanense.